A 295-amino-acid chain; its full sequence is Small ribosomal subunit protein uS2 (295 aa).

The protein belongs to the universal ribosomal protein uS2 family. As to quaternary structure, component of the small ribosomal subunit. Mature ribosomes consist of a small (40S) and a large (60S) subunit. The 40S subunit contains about 33 different proteins and 1 molecule of RNA (18S). The 60S subunit contains about 49 different proteins and 3 molecules of RNA (25S, 5.8S and 5S). Interacts with RPS21.

The protein localises to the cytoplasm. Its function is as follows. Required for the assembly and/or stability of the 40S ribosomal subunit. Required for the processing of the 20S rRNA-precursor to mature 18S rRNA in a late step of the maturation of 40S ribosomal subunits. The polypeptide is Small ribosomal subunit protein uS2 (Paracoccidioides brasiliensis (strain Pb18)).